The primary structure comprises 493 residues: MNSTSLYAAIDLGSNSFHMLVVREASGSIQTLTRIKRKVRLAAGLNNDNHLSAEAMERGWQCLRLFAERLQDIPQPQIRVVATATLRLAVNAGEFIAKAQTILGCPVQVISGEEEARLIYQGVAHTTGGADQRLVVDIGGASTELVTGTGAQTTSLFSLSMGCVTWLERYFSDRNLAQENFDDAEKAARDVLRPVADELRFHGWKVCVGASGTVQALQEIMMAQGMDERITLAKLQQLKQRAIQCGRLEELEIEGLTLERALVFPSGLAILIAIFTELNIQSMTLAGGALREGLVYGMLHLAVDQDIRSRTLRNIQRRFIVDTDQANRVAKLADNFLKQVENAWHIEPISRELLLSACQLHEIGLSVDFKQAPYHAAYLVRHLDLPGYTPAQKKLLATLLLNQTNPVDLSSLHQQNAVPPRVAEQLCRLLRLAILFAGRRRDDLVPEITLQALNENLTLTLPGDWLAHHPLGKELIDQESQWQSYVHWPLDVR.

The protein belongs to the GppA/Ppx family. GppA subfamily.

It carries out the reaction guanosine 3'-diphosphate 5'-triphosphate + H2O = guanosine 3',5'-bis(diphosphate) + phosphate + H(+). It participates in purine metabolism; ppGpp biosynthesis; ppGpp from GTP: step 2/2. In terms of biological role, catalyzes the conversion of pppGpp to ppGpp. Guanosine pentaphosphate (pppGpp) is a cytoplasmic signaling molecule which together with ppGpp controls the 'stringent response', an adaptive process that allows bacteria to respond to amino acid starvation, resulting in the coordinated regulation of numerous cellular activities. The polypeptide is Guanosine-5'-triphosphate,3'-diphosphate pyrophosphatase (Salmonella dublin (strain CT_02021853)).